The sequence spans 400 residues: LIM homeobox transcription factor 1-beta.1 (400 aa).

LIM zinc-binding domains are found at residues 54–113 (AVCE…LFAA) and 114–175 (KCSG…EKDL). A disordered region spans residues 175-228 (LLSSGSPDDSDSVKSDDEEGDVKPGKGRVNQGKGSDDGKDPRRPKRPRTILTTQ). Positions 218 to 277 (PKRPRTILTTQQRRAFKASFEVSSKPCRKVRETLAAETGLSVRVVQVWFQNQRAKIKKLA) form a DNA-binding region, homeobox.

In terms of tissue distribution, shows a temporal expression pattern in three main areas: neural, kidney and limbs. From stage 13 onwards, expressed in regions of the nervous system including the placodes and otic vesicles, eye, specific sets of neurons, and in discreet regions of the neural tube. From stage 13, also expressed in the presumptive pronephros, and from stage 27 expression is predominant in the capsule of the pronephric glomus. Also expressed in the developing forelimbs and hindlimbs. In metamorphosing tadpoles, expressed in the eye, brain, muscle and mesonephric kidney.

Its subcellular location is the nucleus. Its function is as follows. Required for early specification of the kidney glomus, lying upstream of wt1 in the pathway controlling glomus differentiation. The balance in levels and expression patterns of binding partners such as lhx1/lim-1 influences differentiation into glomus or tubule derivatives. Involved in specification of serotonergic neurons. The chain is LIM homeobox transcription factor 1-beta.1 from Xenopus laevis (African clawed frog).